Consider the following 178-residue polypeptide: Interleukin-10 (178 aa).

Residues 1-18 (MPGSALLCCLALLAGVKA) form the signal peptide. Intrachain disulfides connect Cys-30–Cys-126 and Cys-80–Cys-132. Asn-67 carries N-linked (GlcNAc...) asparagine glycosylation. N-linked (GlcNAc...) asparagine glycosylation is present at Asn-134.

Belongs to the IL-10 family. Homodimer. Interacts with IL10RA and IL10RB.

It is found in the secreted. Major immune regulatory cytokine that acts on many cells of the immune system where it has profound anti-inflammatory functions, limiting excessive tissue disruption caused by inflammation. Mechanistically, IL10 binds to its heterotetrameric receptor comprising IL10RA and IL10RB leading to JAK1 and STAT2-mediated phosphorylation of STAT3. In turn, STAT3 translocates to the nucleus where it drives expression of anti-inflammatory mediators. Targets antigen-presenting cells (APCs) such as macrophages and monocytes and inhibits their release of pro-inflammatory cytokines including granulocyte-macrophage colony-stimulating factor /GM-CSF, granulocyte colony-stimulating factor/G-CSF, IL-1 alpha, IL-1 beta, IL-6, IL-8 and TNF-alpha. Also interferes with antigen presentation by reducing the expression of MHC-class II and co-stimulatory molecules, thereby inhibiting their ability to induce T cell activation. In addition, controls the inflammatory response of macrophages by reprogramming essential metabolic pathways including mTOR signaling. The polypeptide is Interleukin-10 (IL10) (Cavia porcellus (Guinea pig)).